Here is a 514-residue protein sequence, read N- to C-terminus: ATP synthase subunit alpha (514 aa).

An ATP-binding site is contributed by 170–177; that stretch reads GDRQIGKT.

This sequence belongs to the ATPase alpha/beta chains family. F-type ATPases have 2 components, CF(1) - the catalytic core - and CF(0) - the membrane proton channel. CF(1) has five subunits: alpha(3), beta(3), gamma(1), delta(1), epsilon(1). CF(0) has three main subunits: a(1), b(2) and c(9-12). The alpha and beta chains form an alternating ring which encloses part of the gamma chain. CF(1) is attached to CF(0) by a central stalk formed by the gamma and epsilon chains, while a peripheral stalk is formed by the delta and b chains.

It localises to the cell inner membrane. The enzyme catalyses ATP + H2O + 4 H(+)(in) = ADP + phosphate + 5 H(+)(out). Functionally, produces ATP from ADP in the presence of a proton gradient across the membrane. The alpha chain is a regulatory subunit. The polypeptide is ATP synthase subunit alpha (Pseudomonas putida (strain ATCC 700007 / DSM 6899 / JCM 31910 / BCRC 17059 / LMG 24140 / F1)).